A 754-amino-acid chain; its full sequence is LON peptidase N-terminal domain and RING finger protein 2 (754 aa).

TPR repeat units lie at residues 23–58 (IAQRLEEGDEAFRAGDYEMAAELFRSMLAGLAQPDR) and 59–91 (GLCLRLGDALARAGRLPEALGAFRGAARLGALR). The disordered stretch occupies residues 112–136 (PLSAENPGGEPEAPGEGGPAPEPRA). The segment covering 115-125 (AENPGGEPEAP) has biased composition (low complexity). 3 TPR repeats span residues 197–230 (LRRLAGQARSLQRQQQPEAALLRCDQALELAPDD), 231–264 (NSLLLLRAELYLTMKNYEQALQDASAACQNEPLL), and 266–298 (KGHQVKAQALSGLGRSKEVLKEFLYCLALNPEC). The interval 398–439 (GLKRQFPDDVEDAPDLNAPGKIPKKDLSLQRSPNSETEESQG) is disordered. A compositionally biased stretch (polar residues) spans 426–439 (LQRSPNSETEESQG). The stretch at 447-483 (FECALCMRLLFEPVTTPCGHTFCLKCLERCLDHAPHC) is one TPR 6 repeat. Residues 449–487 (CALCMRLLFEPVTTPCGHTFCLKCLERCLDHAPHCPLCK) form an RING-type zinc finger. The region spanning 528-737 (MSELSNLTRD…AIRRILVIIT (210 aa)) is the Lon N-terminal domain.

This chain is LON peptidase N-terminal domain and RING finger protein 2 (LONRF2), found in Homo sapiens (Human).